The following is a 202-amino-acid chain: uncharacterized protein (202 aa).

Residue Lys136 forms an Isoglutamyl lysine isopeptide (Lys-Gln) (interchain with Q-Cter in protein Pup) linkage.

This is an uncharacterized protein from Mycobacterium tuberculosis (strain ATCC 25618 / H37Rv).